The sequence spans 116 residues: Ig heavy chain V region 441 (116 aa).

The N-terminal stretch at 1 to 18 (MDFGLIFFIVALLKGVQC) is a signal peptide. Residues 19–116 (EVKLLESGGG…EDTALYYCAR (98 aa)) form the Ig-like domain.

The sequence is that of Ig heavy chain V region 441 from Mus musculus (Mouse).